The following is a 347-amino-acid chain: Sesquiterpene synthase M422DRAFT_47084 (347 aa).

Residues aspartate 93, asparagine 228, serine 232, and glutamate 236 each contribute to the Mg(2+) site. The DDXXD motif signature appears at 93–97; sequence DEYTD. 2 residues coordinate (2E,6E)-farnesyl diphosphate: arginine 318 and tyrosine 319.

It belongs to the terpene synthase family. It depends on Mg(2+) as a cofactor.

The catalysed reaction is (2E,6E)-farnesyl diphosphate = viridiflorene + diphosphate. Terpene cyclase that catalyzes the cyclization of farnesyl diphosphate (FPP) to viridiflorene and viridiflorol. This chain is Sesquiterpene synthase M422DRAFT_47084, found in Sphaerobolus stellatus (strain SS14).